A 349-amino-acid chain; its full sequence is Hydroxymethylglutaryl-CoA synthase (349 aa).

Position 30 (D30) interacts with (3S)-3-hydroxy-3-methylglutaryl-CoA. E82 acts as the Proton donor/acceptor in catalysis. A (3S)-3-hydroxy-3-methylglutaryl-CoA-binding site is contributed by C114. Catalysis depends on C114, which acts as the Acyl-thioester intermediate. R203 contributes to the CoA binding site. (3S)-3-hydroxy-3-methylglutaryl-CoA contacts are provided by T205 and H238. The active-site Proton donor/acceptor is H238. K243 contributes to the CoA binding site. The (3S)-3-hydroxy-3-methylglutaryl-CoA site is built by K247, N270, and S300.

It belongs to the thiolase-like superfamily. Archaeal HMG-CoA synthase family. In terms of assembly, interacts with acetoacetyl-CoA thiolase that catalyzes the precedent step in the pathway and with a DUF35 protein. The acetoacetyl-CoA thiolase/HMG-CoA synthase complex channels the intermediate via a fused CoA-binding site, which allows for efficient coupling of the endergonic thiolase reaction with the exergonic HMGCS reaction.

It catalyses the reaction acetoacetyl-CoA + acetyl-CoA + H2O = (3S)-3-hydroxy-3-methylglutaryl-CoA + CoA + H(+). It functions in the pathway metabolic intermediate biosynthesis; (R)-mevalonate biosynthesis; (R)-mevalonate from acetyl-CoA: step 2/3. In terms of biological role, catalyzes the condensation of acetyl-CoA with acetoacetyl-CoA to form 3-hydroxy-3-methylglutaryl-CoA (HMG-CoA). Functions in the mevalonate (MVA) pathway leading to isopentenyl diphosphate (IPP), a key precursor for the biosynthesis of isoprenoid compounds that are building blocks of archaeal membrane lipids. This chain is Hydroxymethylglutaryl-CoA synthase, found in Methanothermococcus thermolithotrophicus (Methanococcus thermolithotrophicus).